The following is a 315-amino-acid chain: Methionyl-tRNA formyltransferase (315 aa).

113–116 (SLLP) serves as a coordination point for (6S)-5,6,7,8-tetrahydrofolate.

The protein belongs to the Fmt family.

It catalyses the reaction L-methionyl-tRNA(fMet) + (6R)-10-formyltetrahydrofolate = N-formyl-L-methionyl-tRNA(fMet) + (6S)-5,6,7,8-tetrahydrofolate + H(+). In terms of biological role, attaches a formyl group to the free amino group of methionyl-tRNA(fMet). The formyl group appears to play a dual role in the initiator identity of N-formylmethionyl-tRNA by promoting its recognition by IF2 and preventing the misappropriation of this tRNA by the elongation apparatus. In Escherichia fergusonii (strain ATCC 35469 / DSM 13698 / CCUG 18766 / IAM 14443 / JCM 21226 / LMG 7866 / NBRC 102419 / NCTC 12128 / CDC 0568-73), this protein is Methionyl-tRNA formyltransferase.